Reading from the N-terminus, the 268-residue chain is Hydroxyethylthiazole kinase (268 aa).

A substrate-binding site is contributed by Met47. Residues Lys123 and Thr170 each coordinate ATP. Ala196 lines the substrate pocket.

The protein belongs to the Thz kinase family. Mg(2+) serves as cofactor.

It carries out the reaction 5-(2-hydroxyethyl)-4-methylthiazole + ATP = 4-methyl-5-(2-phosphooxyethyl)-thiazole + ADP + H(+). The protein operates within cofactor biosynthesis; thiamine diphosphate biosynthesis; 4-methyl-5-(2-phosphoethyl)-thiazole from 5-(2-hydroxyethyl)-4-methylthiazole: step 1/1. Catalyzes the phosphorylation of the hydroxyl group of 4-methyl-5-beta-hydroxyethylthiazole (THZ). In Finegoldia magna (strain ATCC 29328 / DSM 20472 / WAL 2508) (Peptostreptococcus magnus), this protein is Hydroxyethylthiazole kinase.